The following is a 406-amino-acid chain: uncharacterized protein (406 aa).

G2 carries the N-myristoyl glycine; by host lipid modification. Residues 291–406 (QLESTTEVKP…FQYNKPTYDI (116 aa)) are disordered. Over residues 296-310 (TEVKPESTTEVKPES) the composition is skewed to basic and acidic residues. The span at 311-323 (TSEVQPESTTEFQ) shows a compositional bias: polar residues. Composition is skewed to low complexity over residues 324–333 (PESTTVVEPE), 341–351 (ESTTEFQPEST), and 359–369 (TTEPQVESTTE). The span at 370-406 (FQPESSTEPQVESTVEVQAESMNESSYFQYNKPTYDI) shows a compositional bias: polar residues.

This is an uncharacterized protein from Acanthamoeba polyphaga (Amoeba).